The chain runs to 462 residues: MAATVNLELDPIFLKALGFLHSKSKDSAEKLKALLDESLARGIDSSYRPSQKDVEPPKISSTKNISIKQEPKISSSLPSGNNNGKVLTTEKVKKEAEKRPADKMKSDITEGVDIPKKPRLEKPETQSSPITVQSSKDLPMADLSSFEETSADDFAMEMGLACVVCRQMMVASGNQLVECQECHNLYHRDCHKPQVTDKEANDPRLVWYCARCTRQMKRMAQKTQKPPQKPAPAVVSVTPAVKDPLVKKPETKLKQETTFLAFKRTEVKTSTVISGNSSSASISSSVTSGLTGWAAFAAKTSSAGPSTAKLSSTTQNNTGKPATSSANQKPVGLTGLATSSKGGIGSKIGSNNSTTPTVPLKPPPPLTLGKTGLSRSVSCDNVSKVGLPSPSSLVPGSSSQLSGNGNSGTPGPSGSTASKTTSESSSSPSASLKGPTSQESQLNAMKRLQMVKKKAAQKKLKK.

The interval 42-132 is disordered; that stretch reads GIDSSYRPSQ…PETQSSPITV (91 aa). Polar residues predominate over residues 59-86; the sequence is ISSTKNISIKQEPKISSSLPSGNNNGKV. Lys68 participates in a covalent cross-link: Glycyl lysine isopeptide (Lys-Gly) (interchain with G-Cter in SUMO2). The span at 88–124 shows a compositional bias: basic and acidic residues; the sequence is TTEKVKKEAEKRPADKMKSDITEGVDIPKKPRLEKPE. Ser128 is modified (phosphoserine). The PHD-type zinc-finger motif lies at 159–215; sequence GLACVVCRQMMVASGNQLVECQECHNLYHRDCHKPQVTDKEANDPRLVWYCARCTRQ. A Glycyl lysine isopeptide (Lys-Gly) (interchain with G-Cter in SUMO2) cross-link involves residue Lys254. Over residues 301–328 the composition is skewed to polar residues; it reads SSAGPSTAKLSSTTQNNTGKPATSSANQ. A disordered region spans residues 301–462; that stretch reads SSAGPSTAKL…KKAAQKKLKK (162 aa). Low complexity-rich tracts occupy residues 347 to 358 and 382 to 437; these read KIGSNNSTTPTV and VSKV…GPTS. The span at 449–462 shows a compositional bias: basic residues; that stretch reads QMVKKKAAQKKLKK.

The protein belongs to the Integrator subunit 12 family. Component of the Integrator complex, composed of core subunits INTS1, INTS2, INTS3, INTS4, INTS5, INTS6, INTS7, INTS8, INTS9/RC74, INTS10, INTS11/CPSF3L, INTS12, INTS13, INTS14 and INTS15. The core complex associates with protein phosphatase 2A subunits PPP2CA and PPP2R1A, to form the Integrator-PP2A (INTAC) complex. Dephosphorylated at Ser-128 by the PNUTS-PP1 complex, promoting RNA polymerase II transcription pause-release.

The protein resides in the nucleus. Functionally, component of the integrator complex, a multiprotein complex that terminates RNA polymerase II (Pol II) transcription in the promoter-proximal region of genes. The integrator complex provides a quality checkpoint during transcription elongation by driving premature transcription termination of transcripts that are unfavorably configured for transcriptional elongation: the complex terminates transcription by (1) catalyzing dephosphorylation of the C-terminal domain (CTD) of Pol II subunit POLR2A/RPB1 and SUPT5H/SPT5, (2) degrading the exiting nascent RNA transcript via endonuclease activity and (3) promoting the release of Pol II from bound DNA. The integrator complex is also involved in terminating the synthesis of non-coding Pol II transcripts, such as enhancer RNAs (eRNAs), small nuclear RNAs (snRNAs), telomerase RNAs and long non-coding RNAs (lncRNAs). Mediates recruitment of cytoplasmic dynein to the nuclear envelope, probably as component of the integrator complex. This Pongo abelii (Sumatran orangutan) protein is Integrator complex subunit 12 (INTS12).